Reading from the N-terminus, the 139-residue chain is Ribulose bisphosphate carboxylase small subunit (139 aa).

Belongs to the RuBisCO small chain family. As to quaternary structure, heterohexadecamer of 8 large and 8 small subunits.

It localises to the plastid. The protein resides in the chloroplast. Functionally, ruBisCO catalyzes two reactions: the carboxylation of D-ribulose 1,5-bisphosphate, the primary event in carbon dioxide fixation, as well as the oxidative fragmentation of the pentose substrate in the photorespiration process. Both reactions occur simultaneously and in competition at the same active site. Although the small subunit is not catalytic it is essential for maximal activity. This chain is Ribulose bisphosphate carboxylase small subunit, found in Ectocarpus siliculosus (Brown alga).